The primary structure comprises 521 residues: Vascular endothelial zinc finger 1 (521 aa).

The C2H2-type 1 zinc finger occupies 74 to 96 (FVCTYCSKAFRDSYHLRRHESCH). Residues 140-155 (TTSSSGTNPSSSASTT) are compositionally biased toward low complexity. The tract at residues 140-167 (TTSSSGTNPSSSASTTAMPVTQSVKKPS) is disordered. 5 consecutive C2H2-type zinc fingers follow at residues 174 to 196 (HACEMCGKAFRDVYHLNRHKLSH), 202 to 224 (FECPICNQRFKRKDRMTYHVRSH), 232 to 255 (YTCSVCGKGFSRPDHLSCHVKHVH), 261 to 283 (FKCQTCTAAFATKDRLRTHMVRH), and 287 to 308 (VSCNICGKLLSAAYITSHLKTH). At Lys-362 the chain carries N6-acetyllysine. 4 tandem repeats follow at residues 394–400 (PVTLTTP), 445–451 (PVTITSP), 457–463 (PLTLTTP), and 479–485 (PVTITSP). The tract at residues 394 to 485 (PVTLTTPFSI…IAHPVTITSP (92 aa)) is 4 X 7 AA repeats of P-[LV]-T-[IL]-T-[ST]-P.

It belongs to the krueppel C2H2-type zinc-finger protein family. Interacts with ARHGAP22. Ubiquitously expressed. Highest levels in skeletal muscle and kidney.

The protein resides in the nucleus. In terms of biological role, possible transcription factor. Specifically binds to the CT/GC-rich region of the interleukin-3 promoter and mediates tax transactivation of IL-3. The chain is Vascular endothelial zinc finger 1 (VEZF1) from Homo sapiens (Human).